A 94-amino-acid chain; its full sequence is Aspartyl/glutamyl-tRNA(Asn/Gln) amidotransferase subunit C (94 aa).

This sequence belongs to the GatC family. Heterotrimer of A, B and C subunits.

The enzyme catalyses L-glutamyl-tRNA(Gln) + L-glutamine + ATP + H2O = L-glutaminyl-tRNA(Gln) + L-glutamate + ADP + phosphate + H(+). It catalyses the reaction L-aspartyl-tRNA(Asn) + L-glutamine + ATP + H2O = L-asparaginyl-tRNA(Asn) + L-glutamate + ADP + phosphate + 2 H(+). Its function is as follows. Allows the formation of correctly charged Asn-tRNA(Asn) or Gln-tRNA(Gln) through the transamidation of misacylated Asp-tRNA(Asn) or Glu-tRNA(Gln) in organisms which lack either or both of asparaginyl-tRNA or glutaminyl-tRNA synthetases. The reaction takes place in the presence of glutamine and ATP through an activated phospho-Asp-tRNA(Asn) or phospho-Glu-tRNA(Gln). In Opitutus terrae (strain DSM 11246 / JCM 15787 / PB90-1), this protein is Aspartyl/glutamyl-tRNA(Asn/Gln) amidotransferase subunit C.